The chain runs to 459 residues: Cysteine--tRNA ligase (459 aa).

Cysteine 27 contributes to the Zn(2+) binding site. Positions 29–39 match the 'HIGH' region motif; the sequence is ITVYDDCHIGH. Residues cysteine 208, histidine 233, and glutamate 237 each contribute to the Zn(2+) site. Positions 265 to 269 match the 'KMSKS' region motif; sequence KMSKS. Lysine 268 provides a ligand contact to ATP.

The protein belongs to the class-I aminoacyl-tRNA synthetase family. In terms of assembly, monomer. Zn(2+) is required as a cofactor.

It localises to the cytoplasm. It catalyses the reaction tRNA(Cys) + L-cysteine + ATP = L-cysteinyl-tRNA(Cys) + AMP + diphosphate. In Francisella philomiragia subsp. philomiragia (strain ATCC 25017 / CCUG 19701 / FSC 153 / O#319-036), this protein is Cysteine--tRNA ligase.